Reading from the N-terminus, the 311-residue chain is uncharacterized protein (311 aa).

The next 9 helical transmembrane spans lie at 11–31 (LDNW…GYLS), 34–54 (VGIV…FLSL), 72–92 (LAIS…LFGI), 101–121 (HVIV…FVAQ), 147–167 (IEGI…WYLM), 198–218 (WFGV…FALS), 233–253 (GFIA…SIVI), 257–277 (FALA…TYLL), and 279–299 (TIPF…NVGP).

The protein resides in the cell membrane. This is an uncharacterized protein from Mycoplasma pneumoniae (strain ATCC 29342 / M129 / Subtype 1) (Mycoplasmoides pneumoniae).